A 517-amino-acid chain; its full sequence is Maturase K (517 aa).

Belongs to the intron maturase 2 family. MatK subfamily.

It localises to the plastid. The protein localises to the chloroplast. Its function is as follows. Usually encoded in the trnK tRNA gene intron. Probably assists in splicing its own and other chloroplast group II introns. In Caryota mitis (Burmese fishtail palm), this protein is Maturase K.